Reading from the N-terminus, the 91-residue chain is UPF0335 protein BRADO1188 (91 aa).

Belongs to the UPF0335 family.

The polypeptide is UPF0335 protein BRADO1188 (Bradyrhizobium sp. (strain ORS 278)).